Reading from the N-terminus, the 57-residue chain is UPF0391 membrane protein NE0130 (57 aa).

Transmembrane regions (helical) follow at residues 1 to 21 and 33 to 53; these read MLKW…FGFR and FLFF…LLGI.

Belongs to the UPF0391 family.

It localises to the cell membrane. The protein is UPF0391 membrane protein NE0130 of Nitrosomonas europaea (strain ATCC 19718 / CIP 103999 / KCTC 2705 / NBRC 14298).